The sequence spans 130 residues: Fluoride-specific ion channel FluC (130 aa).

4 consecutive transmembrane segments (helical) span residues 1-21 (MGEI…RYGL), 36-56 (GTLI…QWGF), 65-85 (LKLM…TFSY), and 103-123 (ILAN…LGSL). Positions 75 and 78 each coordinate Na(+).

This sequence belongs to the fluoride channel Fluc/FEX (TC 1.A.43) family.

Its subcellular location is the cell membrane. It carries out the reaction fluoride(in) = fluoride(out). Na(+) is not transported, but it plays an essential structural role and its presence is essential for fluoride channel function. In terms of biological role, fluoride-specific ion channel. Important for reducing fluoride concentration in the cell, thus reducing its toxicity. In Dehalococcoides mccartyi (strain ATCC BAA-2266 / KCTC 15142 / 195) (Dehalococcoides ethenogenes (strain 195)), this protein is Fluoride-specific ion channel FluC.